Reading from the N-terminus, the 337-residue chain is Heat-inducible transcription repressor HrcA (337 aa).

Belongs to the HrcA family.

Negative regulator of class I heat shock genes (grpE-dnaK-dnaJ and groELS operons). Prevents heat-shock induction of these operons. The protein is Heat-inducible transcription repressor HrcA of Kocuria rhizophila (strain ATCC 9341 / DSM 348 / NBRC 103217 / DC2201).